The primary structure comprises 339 residues: Dihydroorotase (339 aa).

Zn(2+) is bound by residues histidine 12 and histidine 14. Residues 14–16 (HVR) and asparagine 40 contribute to the substrate site. Residues lysine 94, histidine 133, histidine 167, and aspartate 239 each coordinate Zn(2+). Residue lysine 94 is modified to N6-carboxylysine. Residue histidine 133 participates in substrate binding. Aspartate 239 is an active-site residue. 2 residues coordinate substrate: histidine 243 and alanine 255.

It belongs to the metallo-dependent hydrolases superfamily. DHOase family. Class II DHOase subfamily. In terms of assembly, homodimer. The cofactor is Zn(2+).

It catalyses the reaction (S)-dihydroorotate + H2O = N-carbamoyl-L-aspartate + H(+). The protein operates within pyrimidine metabolism; UMP biosynthesis via de novo pathway; (S)-dihydroorotate from bicarbonate: step 3/3. Its function is as follows. Catalyzes the reversible cyclization of carbamoyl aspartate to dihydroorotate. In Helicobacter pylori (strain G27), this protein is Dihydroorotase.